A 248-amino-acid chain; its full sequence is Triosephosphate isomerase (248 aa).

2 residues coordinate substrate: N10 and K12. H95 acts as the Electrophile in catalysis. The active-site Proton acceptor is the E165.

The protein belongs to the triosephosphate isomerase family. As to quaternary structure, homodimer.

The protein resides in the cytoplasm. It carries out the reaction D-glyceraldehyde 3-phosphate = dihydroxyacetone phosphate. The protein operates within carbohydrate biosynthesis; gluconeogenesis. It participates in carbohydrate degradation; glycolysis; D-glyceraldehyde 3-phosphate from glycerone phosphate: step 1/1. The protein is Triosephosphate isomerase (TPI1) of Candida albicans (strain SC5314 / ATCC MYA-2876) (Yeast).